The primary structure comprises 315 residues: Methionyl-tRNA formyltransferase (315 aa).

Residue 111–114 (SLLP) participates in (6S)-5,6,7,8-tetrahydrofolate binding.

The protein belongs to the Fmt family.

The catalysed reaction is L-methionyl-tRNA(fMet) + (6R)-10-formyltetrahydrofolate = N-formyl-L-methionyl-tRNA(fMet) + (6S)-5,6,7,8-tetrahydrofolate + H(+). In terms of biological role, attaches a formyl group to the free amino group of methionyl-tRNA(fMet). The formyl group appears to play a dual role in the initiator identity of N-formylmethionyl-tRNA by promoting its recognition by IF2 and preventing the misappropriation of this tRNA by the elongation apparatus. The chain is Methionyl-tRNA formyltransferase from Chlorobium phaeobacteroides (strain DSM 266 / SMG 266 / 2430).